We begin with the raw amino-acid sequence, 984 residues long: MSGAGNKRAAGEPGPSAPPEKKAGVEDSGTTVETIKLGGVSSTEELDIRTLQTKNRKLAEMLDQRQAIEDELREHIEKLERRQATDDASLLIINRYWNQFDENIRIILKRFDLDQGLGDLLSERKALVVPEPEPDSDSNQERKDERERGEGLEPAFSFLATLASSTSEEIESQLQERVESSRRAVAQIVTMYDKLQEKVDVLSHKLNSGDISLMEEAVLELNSYLSHENGRLQELADTLQEKHRIMSQEFSKLQEKVETAESRVSVLETMIDDLQWNIDKIRKREQRLNRHLADVLERVNSKGYKVYGAGSSLYGGTITINARKFEEMNAELEENKELAGNRLNELEELRHDLQEVTTQNEKLKVELRRAVEEAVKETPEYRCMQSQFSVLYNESLQLKAHLDEARTLLHGTRTTHQRQVELIERDEVSLHKKLRTEVMQLEDTLAQVRKEYEMLRIEFEQTLAANEQAGPINREMRHLISSLQNHNHQLKGEVLRYKRKLREAQSDLSKIRSRSGSALLQSQSSTEDTKEEPPEIKQEPDDPSSQVSAPRAASEEASEVKARRDEEERERERREREREREKEKEKEREREKEKEKEKEREREKQKQKESEKERESKEKEKGKHEDGRKKEAEVIKQLKAELKKAQESQKEMKLLLDMYRSAPKEQRDKVQLMAAEKKAKAELEELRQRVKELEDKEKKESKKMADEDALRKIRAVEEQIEYLQKKLAMAKQEEEALLSEMDVTGQAFEDMQEQNIRLMQQLREKDDANFKLMSERIKSNQIHKLLKEEKEELADQVLTLKTQVDAQLQVVRKLEEKEHLLQSSIGTGEKELGLRTQALEMNKRKAMDAAQLADDLKTQLELAQKKLHDFQDEIVESRVTREKEMFNFKRAEEDISRLRRKLETTKKPDMVPNCDEILMEEIKDYKARLTCPCCNMRKKDAVLTKCFHVFCFECVKTRYDTRQRKCPKCNAAFGANDFHRIYIG.

The tract at residues 1–34 (MSGAGNKRAAGEPGPSAPPEKKAGVEDSGTTVET) is disordered. A coiled-coil region spans residues 43-90 (TEELDIRTLQTKNRKLAEMLDQRQAIEDELREHIEKLERRQATDDASL). Residues 128-150 (VVPEPEPDSDSNQERKDERERGE) form a disordered region. A compositionally biased stretch (basic and acidic residues) spans 139–150 (NQERKDERERGE). 2 coiled-coil regions span residues 236–378 (ADTL…VKET) and 429–907 (SLHK…TTKK). The segment at 506 to 632 (SDLSKIRSRS…KHEDGRKKEA (127 aa)) is disordered. The segment covering 514 to 526 (RSGSALLQSQSST) has biased composition (polar residues). Composition is skewed to basic and acidic residues over residues 527 to 540 (EDTK…KQEP) and 558 to 632 (SEVK…KKEA). The RING-type zinc finger occupies 931–970 (CPCCNMRKKDAVLTKCFHVFCFECVKTRYDTRQRKCPKCN).

This sequence belongs to the BRE1 family. In terms of assembly, component of the RNF20/40 complex (also known as BRE1 complex).

The protein localises to the nucleus. The catalysed reaction is S-ubiquitinyl-[E2 ubiquitin-conjugating enzyme]-L-cysteine + [acceptor protein]-L-lysine = [E2 ubiquitin-conjugating enzyme]-L-cysteine + N(6)-ubiquitinyl-[acceptor protein]-L-lysine.. It participates in protein modification; protein ubiquitination. Its function is as follows. Component of the RNF20/40 E3 ubiquitin-protein ligase complex that mediates monoubiquitination of 'Lys-120' of histone H2B (H2BK120ub1). H2BK120ub1 gives a specific tag for epigenetic transcriptional activation and is also prerequisite for histone H3 'Lys-4' and 'Lys-79' methylation (H3K4me and H3K79me, respectively). This is E3 ubiquitin-protein ligase BRE1A (RNF20) from Gallus gallus (Chicken).